The primary structure comprises 194 residues: Probable RNA 2'-phosphotransferase (194 aa).

Belongs to the KptA/TPT1 family.

In terms of biological role, removes the 2'-phosphate from RNA via an intermediate in which the phosphate is ADP-ribosylated by NAD followed by a presumed transesterification to release the RNA and generate ADP-ribose 1''-2''-cyclic phosphate (APPR&gt;P). May function as an ADP-ribosylase. The chain is Probable RNA 2'-phosphotransferase from Escherichia coli O45:K1 (strain S88 / ExPEC).